A 776-amino-acid polypeptide reads, in one-letter code: Lysyl oxidase homolog 2 (776 aa).

The first 25 residues, methionine 1 to alanine 25, serve as a signal peptide directing secretion. SRCR domains are found at residues valine 61–serine 162, isoleucine 191–valine 305, valine 329–asparagine 428, and valine 438–serine 546. 9 disulfides stabilise this stretch: cysteine 87-cysteine 151, cysteine 100-cysteine 161, cysteine 131-cysteine 141, cysteine 221-cysteine 294, cysteine 234-cysteine 304, cysteine 268-cysteine 278, cysteine 354-cysteine 417, cysteine 367-cysteine 427, and cysteine 398-cysteine 408. Asparagine 267 carries an N-linked (GlcNAc...) asparagine glycan. Asparagine 291 carries an N-linked (GlcNAc...) asparagine glycan. An N-linked (GlcNAc...) asparagine glycan is attached at asparagine 458. Intrachain disulfides connect cysteine 467–cysteine 532, cysteine 480–cysteine 545, and cysteine 514–cysteine 524. Positions proline 550 to alanine 753 are lysyl-oxidase like. The Ca(2+) site is built by aspartate 551 and leucine 552. 4 disulfides stabilise this stretch: cysteine 575–cysteine 627, cysteine 581–cysteine 697, cysteine 659–cysteine 675, and cysteine 665–cysteine 687. Cu cation-binding residues include histidine 628, histidine 630, and histidine 632. Asparagine 646 carries an N-linked (GlcNAc...) asparagine glycan. The segment at residues lysine 655 to tyrosine 691 is a cross-link (lysine tyrosylquinone (Lys-Tyr)). The residue at position 691 (tyrosine 691) is a 2',4',5'-topaquinone. Ca(2+) contacts are provided by glutamate 724, aspartate 726, asparagine 729, and asparagine 730. A disulfide bridge connects residues cysteine 734 and cysteine 748.

Belongs to the lysyl oxidase family. As to quaternary structure, component of some chromatin repressor complex. Interacts with SNAI1. Interacts with TAF10. Interacts with HSPA5. Interacts with EFEMP2. Requires Cu cation as cofactor. Lysine tyrosylquinone residue is required as a cofactor. Post-translationally, the lysine tyrosylquinone cross-link (LTQ) is generated by condensation of the epsilon-amino group of a lysine with a topaquinone produced by oxidation of tyrosine. N-glycosylated. N-glycosylation on Asn-458 and Asn-646 may be essential for proper folding and secretion; may be composed of a fucosylated carbohydrates attached to a trimannose N-linked glycan core.

It is found in the secreted. The protein localises to the extracellular space. The protein resides in the extracellular matrix. Its subcellular location is the basement membrane. It localises to the nucleus. It is found in the chromosome. The protein localises to the endoplasmic reticulum. It carries out the reaction L-lysyl-[protein] + O2 + H2O = (S)-2-amino-6-oxohexanoyl-[protein] + H2O2 + NH4(+). Specifically inhibited by a mouse monoclonal antibody AB0023, inhibition occurs in a non-competitive manner. Mediates the post-translational oxidative deamination of lysine residues on target proteins leading to the formation of deaminated lysine (allysine). Acts as a transcription corepressor and specifically mediates deamination of trimethylated 'Lys-4' of histone H3 (H3K4me3), a specific tag for epigenetic transcriptional activation. Shows no activity against histone H3 when it is trimethylated on 'Lys-9' (H3K9me3) or 'Lys-27' (H3K27me3) or when 'Lys-4' is monomethylated (H3K4me1) or dimethylated (H3K4me2). Also mediates deamination of methylated TAF10, a member of the transcription factor IID (TFIID) complex, which induces release of TAF10 from promoters, leading to inhibition of TFIID-dependent transcription. LOXL2-mediated deamination of TAF10 results in transcriptional repression of genes required for embryonic stem cell pluripotency including POU5F1/OCT4, NANOG, KLF4 and SOX2. Involved in epithelial to mesenchymal transition (EMT) via interaction with SNAI1 and participates in repression of E-cadherin CDH1, probably by mediating deamination of histone H3. During EMT, involved with SNAI1 in negatively regulating pericentromeric heterochromatin transcription. SNAI1 recruits LOXL2 to pericentromeric regions to oxidize histone H3 and repress transcription which leads to release of heterochromatin component CBX5/HP1A, enabling chromatin reorganization and acquisition of mesenchymal traits. Interacts with the endoplasmic reticulum protein HSPA5 which activates the IRE1-XBP1 pathway of the unfolded protein response, leading to expression of several transcription factors involved in EMT and subsequent EMT induction. When secreted into the extracellular matrix, promotes cross-linking of extracellular matrix proteins by mediating oxidative deamination of peptidyl lysine residues in precursors to fibrous collagen and elastin. Acts as a regulator of sprouting angiogenesis, probably via collagen IV scaffolding. Acts as a regulator of chondrocyte differentiation, probably by regulating expression of factors that control chondrocyte differentiation. The protein is Lysyl oxidase homolog 2 (Loxl2) of Rattus norvegicus (Rat).